The primary structure comprises 146 residues: Cytochrome c oxidase subunit 5A, mitochondrial (146 aa).

Residues Met-1–Tyr-37 constitute a mitochondrion transit peptide. Positions Leu-2 to Arg-16 match the SIFI-degron motif. An N6-acetyllysine mark is found at Lys-83 and Lys-109. Position 137 is a phosphothreonine (Thr-137).

As to quaternary structure, component of the cytochrome c oxidase (complex IV, CIV), a multisubunit enzyme composed of 14 subunits. The complex is composed of a catalytic core of 3 subunits MT-CO1, MT-CO2 and MT-CO3, encoded in the mitochondrial DNA, and 11 supernumerary subunits COX4I, COX5A, COX5B, COX6A, COX6B, COX6C, COX7A, COX7B, COX7C, COX8 and NDUFA4, which are encoded in the nuclear genome. The complex exists as a monomer or a dimer and forms supercomplexes (SCs) in the inner mitochondrial membrane with NADH-ubiquinone oxidoreductase (complex I, CI) and ubiquinol-cytochrome c oxidoreductase (cytochrome b-c1 complex, complex III, CIII), resulting in different assemblies (supercomplex SCI(1)III(2)IV(1) and megacomplex MCI(2)III(2)IV(2)). Interacts with AFG1L. Interacts with RAB5IF. In response to mitochondrial stress, the precursor protein is ubiquitinated by the SIFI complex in the cytoplasm before mitochondrial import, leading to its degradation. Within the SIFI complex, UBR4 initiates ubiquitin chain that are further elongated or branched by KCMF1. Expressed in the head of epididymal sperm but not in testicular sperm (at protein level).

It is found in the mitochondrion inner membrane. It participates in energy metabolism; oxidative phosphorylation. Functionally, component of the cytochrome c oxidase, the last enzyme in the mitochondrial electron transport chain which drives oxidative phosphorylation. The respiratory chain contains 3 multisubunit complexes succinate dehydrogenase (complex II, CII), ubiquinol-cytochrome c oxidoreductase (cytochrome b-c1 complex, complex III, CIII) and cytochrome c oxidase (complex IV, CIV), that cooperate to transfer electrons derived from NADH and succinate to molecular oxygen, creating an electrochemical gradient over the inner membrane that drives transmembrane transport and the ATP synthase. Cytochrome c oxidase is the component of the respiratory chain that catalyzes the reduction of oxygen to water. Electrons originating from reduced cytochrome c in the intermembrane space (IMS) are transferred via the dinuclear copper A center (CU(A)) of subunit 2 and heme A of subunit 1 to the active site in subunit 1, a binuclear center (BNC) formed by heme A3 and copper B (CU(B)). The BNC reduces molecular oxygen to 2 water molecules using 4 electrons from cytochrome c in the IMS and 4 protons from the mitochondrial matrix. The chain is Cytochrome c oxidase subunit 5A, mitochondrial (Cox5a) from Rattus norvegicus (Rat).